Consider the following 141-residue polypeptide: MSTAETPQQPQQQQKLRWGIAWIYSSSNNTIITITDLTGAETVARVSGGMVVRADKDKPSPWAAMQAAYKAAQLALARGINAVHIKVRGPGGYGMKVPGPGASAAIRALARSGLVIGRIEDVTPIPHDTIRPPSGRKGRRV.

It belongs to the universal ribosomal protein uS11 family. Part of the 30S ribosomal subunit.

Located on the platform of the 30S subunit. This chain is Small ribosomal subunit protein uS11, found in Pyrobaculum calidifontis (strain DSM 21063 / JCM 11548 / VA1).